The chain runs to 138 residues: Odorant-binding protein 22 (138 aa).

The signal sequence occupies residues 1–16 (MKVFIAVFALIAVAAA). Position 30 (R30) interacts with (5Z,8Z,11Z,14Z)-eicosatetraenoate. (9Z)-hexadecenoate contacts are provided by R30 and Y61. The (9Z,12Z)-octadecadienoate site is built by R30 and Y61. Intrachain disulfides connect C33–C64, C60–C113, and C103–C122. A glycan (N-linked (GlcNAc...) asparagine) is linked at N127.

The protein belongs to the PBP/GOBP family. As to quaternary structure, monomer in solution. High-level expression in female mouth parts, particularly in the proboscis (at protein level). Moderate-level expression in female antenna (at protein level). Expressed in testis but not in the accessory gland or ejaculatory duct (at protein level). Expressed in spermathecae (at protein level). Female salivary gland. Female chemosensory organs: antenna, palp and proboscis. Not detected in midgut.

It localises to the secreted. In terms of biological role, involved in modulation of blood-feeding behavior and capacity in female mosquitoes. Required for normal oviposition. Required for normal fecundity and fertility of female and male mosquitoes. Required for normal expression of VGA1 gene, which encodes the egg yolk protein vitellogenin-A1. Involved in regulation of spermatozoa development. Required for normal female longevity when mosquitoes are maintained on regular sugar meal. Binds long chain fatty acids. (Microbial infection) Facilitates shedding of dengue virus type 2 particles into mosquito saliva. Does not affect dengue virus type 2 replication or infection prevalence in midgut and salivary glands at 14 days after blood feeding. Functionally, (Microbial infection) Facilitates shedding of Zika virus particles into mosquito saliva. Does not affect Zika virus replication or infection prevalence in midgut and salivary glands at 14 days after blood feeding. This Aedes aegypti (Yellowfever mosquito) protein is Odorant-binding protein 22.